Reading from the N-terminus, the 503-residue chain is Cytochrome P450 11B2, mitochondrial (503 aa).

Residues methionine 1–leucine 24 constitute a mitochondrion transit peptide. 21-hydroxyprogesterone is bound at residue phenylalanine 381. Position 450 (cysteine 450) interacts with heme.

It belongs to the cytochrome P450 family. Heme is required as a cofactor. In terms of tissue distribution, expressed sporadically in the zona glomerulosa (zG) of the adrenal cortex (conventional zonation), as well as in aldosterone-producing cell clusters (APCCs) composed of morphological zG cells in contact with the capsule (variegated zonation).

It is found in the mitochondrion inner membrane. It carries out the reaction a steroid + 2 reduced [adrenodoxin] + O2 + 2 H(+) = an 11beta-hydroxysteroid + 2 oxidized [adrenodoxin] + H2O. The catalysed reaction is 21-hydroxyprogesterone + 2 reduced [adrenodoxin] + O2 + 2 H(+) = corticosterone + 2 oxidized [adrenodoxin] + H2O. It catalyses the reaction corticosterone + 2 reduced [adrenodoxin] + O2 + 2 H(+) = 18-hydroxycorticosterone + 2 oxidized [adrenodoxin] + H2O. The enzyme catalyses 18-hydroxycorticosterone + 2 reduced [adrenodoxin] + O2 + 2 H(+) = aldosterone + 2 oxidized [adrenodoxin] + 2 H2O. It carries out the reaction 11-deoxycortisol + 2 reduced [adrenodoxin] + O2 + 2 H(+) = cortisol + 2 oxidized [adrenodoxin] + H2O. The catalysed reaction is 21-hydroxyprogesterone + 2 reduced [adrenodoxin] + O2 + 2 H(+) = 18-hydroxy-11-deoxycorticosterone + 2 oxidized [adrenodoxin] + H2O. It catalyses the reaction cortisol + 2 reduced [adrenodoxin] + O2 + 2 H(+) = 18-hydroxycortisol + 2 oxidized [adrenodoxin] + H2O. The enzyme catalyses 18-hydroxycortisol + 2 reduced [adrenodoxin] + O2 + 2 H(+) = 18-oxocortisol + 2 oxidized [adrenodoxin] + 2 H2O. Its pathway is steroid biosynthesis. Functionally, a cytochrome P450 monooxygenase that catalyzes the biosynthesis of aldosterone, the main mineralocorticoid in the human body responsible for salt and water homeostasis, thus involved in blood pressure regulation, arterial hypertension, and the development of heart failure. Catalyzes three sequential oxidative reactions of 11-deoxycorticosterone (21-hydroxyprogesterone), namely 11-beta hydroxylation, followed by two successive oxidations at C18 yielding 18-hydroxy and then 18-oxo intermediates (that would not leave the enzyme active site during the consecutive hydroxylation reactions), ending with the formation of aldosterone. Can also produce 18-hydroxycortisol and 18-oxocortisol, derived from successive oxidations of cortisol at C18, normally found at very low levels, but significantly increased in primary aldosteronism, the most common form of secondary hypertension. Mechanistically, uses molecular oxygen inserting one oxygen atom into a substrate and reducing the second into a water molecule. Two electrons are provided by NADPH via a two-protein mitochondrial transfer system comprising flavoprotein FDXR (adrenodoxin/ferredoxin reductase) and nonheme iron-sulfur protein FDX1 or FDX2 (adrenodoxin/ferredoxin). Could also be involved in the androgen metabolic pathway. In Homo sapiens (Human), this protein is Cytochrome P450 11B2, mitochondrial.